A 300-amino-acid chain; its full sequence is Recombination-associated protein RdgC (300 aa).

Belongs to the RdgC family.

It localises to the cytoplasm. The protein resides in the nucleoid. May be involved in recombination. The chain is Recombination-associated protein RdgC from Herminiimonas arsenicoxydans.